We begin with the raw amino-acid sequence, 644 residues long: Chaperone protein HtpG (644 aa).

Positions 1–352 (MNARVEQLEF…AQDMSLNVSR (352 aa)) are a; substrate-binding. The segment at 353 to 566 (EILQQDRQIK…AFGITPALAR (214 aa)) is b. The segment at 567–644 (LYRASGQDIP…ILADRLARTL (78 aa)) is c.

Belongs to the heat shock protein 90 family. As to quaternary structure, homodimer.

The protein localises to the cytoplasm. Molecular chaperone. Has ATPase activity. The protein is Chaperone protein HtpG of Mycolicibacterium paratuberculosis (strain ATCC BAA-968 / K-10) (Mycobacterium paratuberculosis).